Here is a 274-residue protein sequence, read N- to C-terminus: Deoxyribonuclease TATDN3 (274 aa).

Zn(2+)-binding residues include histidine 12, histidine 14, glutamate 107, histidine 147, histidine 170, and aspartate 218.

Belongs to the metallo-dependent hydrolases superfamily. TatD-type hydrolase family. Mn(2+) is required as a cofactor. It depends on Ca(2+) as a cofactor. The cofactor is Mg(2+). Zn(2+) serves as cofactor.

Its subcellular location is the nucleus. The 3'-exonuclease activity is sensitive to the metal ion present in the active site, whereas the AP endodeoxyribonuclease activity is observed in a variety of divalent metal cofactors. 3'-exoxonuclease activity is suppressed in the presence of Ca(2+), Zn(2+) and Ni(2+). Functionally, exhibits 3'-exonuclease activities and apurinic/apyrimidinic (AP) endonuclease (in vitro). Show preferential AP endonuclease activity on double-stranded DNA substrates and 3'- exonuclease activity on single-stranded DNA. In Homo sapiens (Human), this protein is Deoxyribonuclease TATDN3 (TATDN3).